The chain runs to 103 residues: MIVTTTSTIQGKEIIEYIDIVNGEAIMGANIVRDLFASVRDVVGGRAGAYESKLKEARDIAMEEMKTFARQKNANAIVGIDVDYEVVREGMLMVAVSGTAVRI.

This sequence belongs to the UPF0145 family.

In Bacillus cereus (strain ATCC 10987 / NRS 248), this protein is UPF0145 protein BCE_5284.